The following is a 271-amino-acid chain: Formamidopyrimidine-DNA glycosylase (271 aa).

Pro2 functions as the Schiff-base intermediate with DNA in the catalytic mechanism. Glu3 functions as the Proton donor in the catalytic mechanism. Residue Lys57 is the Proton donor; for beta-elimination activity of the active site. Residues His90, Arg109, and Lys151 each coordinate DNA. Residues 236-270 form an FPG-type zinc finger; the sequence is HVYGRGGETCTSCGNLLSEIRLGQRTTVFCGICQT. Arg260 functions as the Proton donor; for delta-elimination activity in the catalytic mechanism.

This sequence belongs to the FPG family. As to quaternary structure, monomer. Requires Zn(2+) as cofactor.

It catalyses the reaction Hydrolysis of DNA containing ring-opened 7-methylguanine residues, releasing 2,6-diamino-4-hydroxy-5-(N-methyl)formamidopyrimidine.. The catalysed reaction is 2'-deoxyribonucleotide-(2'-deoxyribose 5'-phosphate)-2'-deoxyribonucleotide-DNA = a 3'-end 2'-deoxyribonucleotide-(2,3-dehydro-2,3-deoxyribose 5'-phosphate)-DNA + a 5'-end 5'-phospho-2'-deoxyribonucleoside-DNA + H(+). In terms of biological role, involved in base excision repair of DNA damaged by oxidation or by mutagenic agents. Acts as a DNA glycosylase that recognizes and removes damaged bases. Has a preference for oxidized purines, such as 7,8-dihydro-8-oxoguanine (8-oxoG). Has AP (apurinic/apyrimidinic) lyase activity and introduces nicks in the DNA strand. Cleaves the DNA backbone by beta-delta elimination to generate a single-strand break at the site of the removed base with both 3'- and 5'-phosphates. This Shewanella baltica (strain OS155 / ATCC BAA-1091) protein is Formamidopyrimidine-DNA glycosylase.